The chain runs to 1011 residues: Vacuolar membrane protease (1011 aa).

Residues 1–9 (MSNPFAFRS) lie on the Cytoplasmic side of the membrane. A helical transmembrane segment spans residues 10-30 (AQVTFWTTVVYLALLVPLVVI). Residues 31–378 (NEGVPPVQPD…TFVLFGLRGM (348 aa)) lie on the Vacuolar side of the membrane. Asparagine 50 and asparagine 106 each carry an N-linked (GlcNAc...) asparagine glycan. Zn(2+) is bound by residues histidine 159 and aspartate 171. The active-site Proton acceptor is the glutamate 205. Zn(2+) is bound by residues glutamate 206, glutamate 231, and histidine 304. Asparagine 331 carries an N-linked (GlcNAc...) asparagine glycan. The helical transmembrane segment at 379–399 (FAWSLTVLIVGPLTLFGMMYL) threads the bilayer. Residues 400–439 (VHKQGKGYAFHTKLRATSDSSSEDGDDEDGEVIRLGGWKG) are Cytoplasmic-facing. Residues 440–460 (FFRFPFALIVAGALVTGAALL) form a helical membrane-spanning segment. Residues 461-471 (LRKMNPFIIYS) are Vacuolar-facing. Residues 472-492 (SEYAVWAMMISLFYFGFWLIM) traverse the membrane as a helical segment. Residues 493-505 (RGSSYTRPSALHR) lie on the Cytoplasmic side of the membrane. Residues 506–526 (LYVHIWLFILGWVALVFATVL) form a helical membrane-spanning segment. Residues 527 to 536 (EDRMRIASGY) lie on the Vacuolar side of the membrane. A helical membrane pass occupies residues 537–557 (IFVFWESQVFLATLVAVCELF). Residues 558 to 682 (SLPRKIDFAR…WSGPMVTSTW (125 aa)) are Cytoplasmic-facing. Over residues 595–609 (EATSPQRAGQSSNSP) the composition is skewed to polar residues. Disordered stretches follow at residues 595 to 627 (EATS…LFRK) and 650 to 671 (IMDS…EGEQ). Acidic residues predominate over residues 610–622 (QEDDEDDVPDEET). Residues 683 to 703 (ILQFLLLGPFMVILGGQVGLL) form a helical membrane-spanning segment. Over 704-719 (LTSAVNQTGVDGSSLL) the chain is Vacuolar. N-linked (GlcNAc...) asparagine glycosylation is present at asparagine 709. A helical membrane pass occupies residues 720-740 (APYLMIAALSAILLMPLSPFI). At 741 to 747 (HRVTKHV) the chain is on the cytoplasmic side. Residues 748–768 (PLFLLAVAFATLIYSLVAFPF) traverse the membrane as a helical segment. Topologically, residues 769–1011 (SPRAPYKTFF…LVEGSKAFKV (243 aa)) are vacuolar. The N-linked (GlcNAc...) asparagine glycan is linked to asparagine 872.

The protein belongs to the peptidase M28 family. Requires Zn(2+) as cofactor.

Its subcellular location is the vacuole membrane. In terms of biological role, may be involved in vacuolar sorting and osmoregulation. This Pyricularia oryzae (strain 70-15 / ATCC MYA-4617 / FGSC 8958) (Rice blast fungus) protein is Vacuolar membrane protease.